The sequence spans 906 residues: Aconitate hydratase A (906 aa).

Positions Met-1 to Ser-2 are excised as a propeptide. 3 residues coordinate [4Fe-4S] cluster: Cys-441, Cys-507, and Cys-510.

Belongs to the aconitase/IPM isomerase family. In terms of assembly, monomer. [4Fe-4S] cluster serves as cofactor.

It carries out the reaction citrate = D-threo-isocitrate. It catalyses the reaction (2S,3R)-3-hydroxybutane-1,2,3-tricarboxylate = 2-methyl-cis-aconitate + H2O. It functions in the pathway carbohydrate metabolism; tricarboxylic acid cycle; isocitrate from oxaloacetate: step 2/2. The protein operates within organic acid metabolism; propanoate degradation. Involved in the catabolism of short chain fatty acids (SCFA) via the tricarboxylic acid (TCA)(acetyl degradation route) and probably the 2-methylcitrate cycle I (propionate degradation route). Catalyzes the reversible isomerization of citrate to isocitrate via cis-aconitate. Could catalyze the hydration of 2-methyl-cis-aconitate to yield (2R,3S)-2-methylisocitrate. The apo form of AcnA functions as a RNA-binding regulatory protein. In Deinococcus radiodurans (strain ATCC 13939 / DSM 20539 / JCM 16871 / CCUG 27074 / LMG 4051 / NBRC 15346 / NCIMB 9279 / VKM B-1422 / R1), this protein is Aconitate hydratase A (acn).